Here is a 149-residue protein sequence, read N- to C-terminus: Arginine repressor (149 aa).

It belongs to the ArgR family.

It is found in the cytoplasm. It participates in amino-acid biosynthesis; L-arginine biosynthesis [regulation]. In terms of biological role, regulates arginine biosynthesis genes. The polypeptide is Arginine repressor (Alkaliphilus oremlandii (strain OhILAs) (Clostridium oremlandii (strain OhILAs))).